A 226-amino-acid polypeptide reads, in one-letter code: MTPNDTENAARPLPEGAVDPAQDAAGAPDTLAPAAQADAVAALEAEKLDLKNKLLRALADMENLRRRTEREVADARTYAVTNFARDMLNVADNVRRALDSVPVEDRAAADGALKALLDGIELTGRDLAKTLERHGVRAVEPQGQRFDPNLHQAMFEVPNPDVANGTVVQVVQTGYVIGDRVLRPALVGVSKGGPKAAEASKPAGEAPKPAGEAPKPAGDGQKPAEA.

Disordered regions lie at residues 1–31 (MTPNDTENAARPLPEGAVDPAQDAAGAPDTL) and 189–226 (VSKGGPKAAEASKPAGEAPKPAGEAPKPAGDGQKPAEA). Over residues 192-218 (GGPKAAEASKPAGEAPKPAGEAPKPAG) the composition is skewed to low complexity.

Belongs to the GrpE family. Homodimer.

It localises to the cytoplasm. Its function is as follows. Participates actively in the response to hyperosmotic and heat shock by preventing the aggregation of stress-denatured proteins, in association with DnaK and GrpE. It is the nucleotide exchange factor for DnaK and may function as a thermosensor. Unfolded proteins bind initially to DnaJ; upon interaction with the DnaJ-bound protein, DnaK hydrolyzes its bound ATP, resulting in the formation of a stable complex. GrpE releases ADP from DnaK; ATP binding to DnaK triggers the release of the substrate protein, thus completing the reaction cycle. Several rounds of ATP-dependent interactions between DnaJ, DnaK and GrpE are required for fully efficient folding. The protein is Protein GrpE of Methylobacterium nodulans (strain LMG 21967 / CNCM I-2342 / ORS 2060).